A 356-amino-acid polypeptide reads, in one-letter code: 3-dehydroquinate synthase (356 aa).

NAD(+) contacts are provided by residues 71–76 (EGEASK), 105–109 (GVTGD), 129–130 (TS), lysine 142, and lysine 151. Positions 184, 247, and 264 each coordinate Zn(2+).

The protein belongs to the sugar phosphate cyclases superfamily. Dehydroquinate synthase family. Requires Co(2+) as cofactor. Zn(2+) serves as cofactor. NAD(+) is required as a cofactor.

The protein localises to the cytoplasm. It carries out the reaction 7-phospho-2-dehydro-3-deoxy-D-arabino-heptonate = 3-dehydroquinate + phosphate. It functions in the pathway metabolic intermediate biosynthesis; chorismate biosynthesis; chorismate from D-erythrose 4-phosphate and phosphoenolpyruvate: step 2/7. Catalyzes the conversion of 3-deoxy-D-arabino-heptulosonate 7-phosphate (DAHP) to dehydroquinate (DHQ). This chain is 3-dehydroquinate synthase, found in Lactococcus lactis subsp. cremoris (strain SK11).